Consider the following 257-residue polypeptide: Tryptophan synthase alpha chain (257 aa).

Residues glutamate 44 and aspartate 55 each act as proton acceptor in the active site.

Belongs to the TrpA family. In terms of assembly, tetramer of two alpha and two beta chains.

It carries out the reaction (1S,2R)-1-C-(indol-3-yl)glycerol 3-phosphate + L-serine = D-glyceraldehyde 3-phosphate + L-tryptophan + H2O. Its pathway is amino-acid biosynthesis; L-tryptophan biosynthesis; L-tryptophan from chorismate: step 5/5. Functionally, the alpha subunit is responsible for the aldol cleavage of indoleglycerol phosphate to indole and glyceraldehyde 3-phosphate. The polypeptide is Tryptophan synthase alpha chain (Chlamydia felis (strain Fe/C-56) (Chlamydophila felis)).